A 315-amino-acid chain; its full sequence is Neuroguidin (315 aa).

A2 carries the N-acetylalanine modification. A coiled-coil region spans residues 13–41; the sequence is SAVTLLKNLQEQVMAVTAQVKSLTQKVQA. A necessary for interaction with EIF4E region spans residues 41-174; that stretch reads AGAYPTEKGL…KGVSKKYVPP (134 aa). A phosphoserine mark is found at S121, S142, and S143. Residues 124–169 form a disordered region; sequence ENDPLRFKPHPSNMMSKLSSEDEEEDEAEDDQSEASGKKSVKGVSK. The span at 144–156 shows a compositional bias: acidic residues; it reads EDEEEDEAEDDQS. Residues 181-205 are a coiled coil; sequence YDETEAEREKKRLERAKRRALSSSV. Phosphoserine occurs at positions 204 and 214. The interval 277-315 is disordered; the sequence is DISALTGGTVHLDEDQNPIKKRKKIPQKGRKKKGFRRRR. The segment covering 295–315 has biased composition (basic residues); sequence IKKRKKIPQKGRKKKGFRRRR.

Belongs to the SAS10 family. In terms of assembly, part of the small subunit (SSU) processome, composed of more than 70 proteins and the RNA chaperone small nucleolar RNA (snoRNA) U3. Interacts with CPEB1 and EIF4E.

It localises to the nucleus. It is found in the nucleolus. Its subcellular location is the chromosome. The protein resides in the centromere. The protein localises to the cytoplasm. It localises to the cell projection. It is found in the axon. Its subcellular location is the dendrite. The protein resides in the filopodium. Functionally, part of the small subunit (SSU) processome, first precursor of the small eukaryotic ribosomal subunit. During the assembly of the SSU processome in the nucleolus, many ribosome biogenesis factors, an RNA chaperone and ribosomal proteins associate with the nascent pre-rRNA and work in concert to generate RNA folding, modifications, rearrangements and cleavage as well as targeted degradation of pre-ribosomal RNA by the RNA exosome. Its dissociation from the complex determines the transition from state pre-A1 to state pre-A1*. Inhibits mRNA translation in a cytoplasmic polyadenylation element (CPE)-dependent manner. This chain is Neuroguidin, found in Homo sapiens (Human).